Reading from the N-terminus, the 307-residue chain is tRNA dimethylallyltransferase (307 aa).

ATP is bound at residue 9–16 (GPTAIGKT). Residue 11–16 (TAIGKT) participates in substrate binding. Interaction with substrate tRNA regions lie at residues 34-37 (DSRQ) and 164-168 (QRMMR).

The protein belongs to the IPP transferase family. Monomer. Mg(2+) serves as cofactor.

It carries out the reaction adenosine(37) in tRNA + dimethylallyl diphosphate = N(6)-dimethylallyladenosine(37) in tRNA + diphosphate. In terms of biological role, catalyzes the transfer of a dimethylallyl group onto the adenine at position 37 in tRNAs that read codons beginning with uridine, leading to the formation of N6-(dimethylallyl)adenosine (i(6)A). This chain is tRNA dimethylallyltransferase, found in Flavobacterium psychrophilum (strain ATCC 49511 / DSM 21280 / CIP 103535 / JIP02/86).